The primary structure comprises 186 residues: ATP synthase subunit delta (186 aa).

The protein belongs to the ATPase delta chain family. As to quaternary structure, F-type ATPases have 2 components, F(1) - the catalytic core - and F(0) - the membrane proton channel. F(1) has five subunits: alpha(3), beta(3), gamma(1), delta(1), epsilon(1). F(0) has three main subunits: a(1), b(2) and c(10-14). The alpha and beta chains form an alternating ring which encloses part of the gamma chain. F(1) is attached to F(0) by a central stalk formed by the gamma and epsilon chains, while a peripheral stalk is formed by the delta and b chains.

It is found in the cell inner membrane. F(1)F(0) ATP synthase produces ATP from ADP in the presence of a proton or sodium gradient. F-type ATPases consist of two structural domains, F(1) containing the extramembraneous catalytic core and F(0) containing the membrane proton channel, linked together by a central stalk and a peripheral stalk. During catalysis, ATP synthesis in the catalytic domain of F(1) is coupled via a rotary mechanism of the central stalk subunits to proton translocation. Its function is as follows. This protein is part of the stalk that links CF(0) to CF(1). It either transmits conformational changes from CF(0) to CF(1) or is implicated in proton conduction. The chain is ATP synthase subunit delta from Fuscovulum blasticum (Rhodobacter blasticus).